A 584-amino-acid polypeptide reads, in one-letter code: 2-succinyl-5-enolpyruvyl-6-hydroxy-3-cyclohexene-1-carboxylate synthase (584 aa).

The protein belongs to the TPP enzyme family. MenD subfamily. Homodimer. The cofactor is Mg(2+). Mn(2+) is required as a cofactor. Requires thiamine diphosphate as cofactor.

The enzyme catalyses isochorismate + 2-oxoglutarate + H(+) = 5-enolpyruvoyl-6-hydroxy-2-succinyl-cyclohex-3-ene-1-carboxylate + CO2. Its pathway is quinol/quinone metabolism; 1,4-dihydroxy-2-naphthoate biosynthesis; 1,4-dihydroxy-2-naphthoate from chorismate: step 2/7. The protein operates within quinol/quinone metabolism; menaquinone biosynthesis. Catalyzes the thiamine diphosphate-dependent decarboxylation of 2-oxoglutarate and the subsequent addition of the resulting succinic semialdehyde-thiamine pyrophosphate anion to isochorismate to yield 2-succinyl-5-enolpyruvyl-6-hydroxy-3-cyclohexene-1-carboxylate (SEPHCHC). The chain is 2-succinyl-5-enolpyruvyl-6-hydroxy-3-cyclohexene-1-carboxylate synthase from Bacillus anthracis.